We begin with the raw amino-acid sequence, 387 residues long: Alpha-maltose-1-phosphate synthase (387 aa).

The protein belongs to the glycosyltransferase group 1 family.

It carries out the reaction ADP-alpha-D-glucose + alpha-D-glucose 1-phosphate = alpha-maltose 1-phosphate + ADP + H(+). It participates in glycan biosynthesis; glycogen biosynthesis. Functionally, involved in the biosynthesis of the maltose-1-phosphate (M1P) building block required for alpha-glucan production by the key enzyme GlgE. Catalyzes the formation of an alpha-1,4 linkage between glucose from ADP-glucose and glucose 1-phosphate (G1P) to yield maltose-1-phosphate (M1P). This chain is Alpha-maltose-1-phosphate synthase, found in Mycolicibacterium smegmatis (strain ATCC 700084 / mc(2)155) (Mycobacterium smegmatis).